The chain runs to 210 residues: Regulator of G-protein signaling 17 (210 aa).

Residues 1 to 21 (MRKRQQSQNEGTPAVSQAPGN) are disordered. An RGS domain is found at 84–200 (NFDKMMKAPA…LNSQIYKSFV (117 aa)). Tyr137 carries the phosphotyrosine modification.

Interacts with GNAI1 and GNAQ. Interacts with GNAZ and GNAI2. Interacts with OPRM1. Forms a complex with mu-opioid receptors and G(alpha)z/i2 subunits, including GNAZ and GNAI2; the formation of this complex results in mu-opioid receptor desensitization. Interacts with HINT1. Post-translationally, N- and O-glycosylated in synapsomal membranes. In terms of processing, serine phosphorylated in synapsomal membranes. Sumoylated with SUMO1 and SUM02 in synaptosomes. The sumoylated forms act as a scaffold for sequestering mu-opioid receptor-activated G(alpha) subunits. Desumoylated by HINT1. Predominantly expressed in the cerebellum. Also expressed in the cortex and medulla. Weakly expressed in a number of peripheral tissues notably spleen, lung and leukocytes.

It is found in the membrane. It localises to the synapse. The protein resides in the synaptosome. The protein localises to the nucleus. Its subcellular location is the cytoplasm. Functionally, regulates G protein-coupled receptor signaling cascades, including signaling via muscarinic acetylcholine receptor CHRM2 and dopamine receptor DRD2. Inhibits signal transduction by increasing the GTPase activity of G protein alpha subunits, thereby driving them into their inactive GDP-bound form. Binds selectively to GNAZ and GNAI2 subunits, accelerates their GTPase activity and regulates their signaling activities. Negatively regulates mu-opioid receptor-mediated activation of the G-proteins. The sequence is that of Regulator of G-protein signaling 17 (RGS17) from Homo sapiens (Human).